A 140-amino-acid polypeptide reads, in one-letter code: Large ribosomal subunit protein mL43 (140 aa).

This sequence belongs to the mitochondrion-specific ribosomal protein mL43 family. Component of the mitochondrial large ribosomal subunit (mt-LSU). Mature yeast 74S mitochondrial ribosomes consist of a small (37S) and a large (54S) subunit. The 37S small subunit contains a 15S ribosomal RNA (15S mt-rRNA) and 34 different proteins. The 54S large subunit contains a 21S rRNA (21S mt-rRNA) and 46 different proteins.

The protein localises to the mitochondrion. Functionally, component of the mitochondrial ribosome (mitoribosome), a dedicated translation machinery responsible for the synthesis of mitochondrial genome-encoded proteins, including at least some of the essential transmembrane subunits of the mitochondrial respiratory chain. The mitoribosomes are attached to the mitochondrial inner membrane and translation products are cotranslationally integrated into the membrane. Also has an extraribosomal function, being essential for mitochondrial genome integrity. May interact with MHR1 to take part in the mtDNA repair mechanism. This is Large ribosomal subunit protein mL43 (MRPL51) from Saccharomyces cerevisiae (strain ATCC 204508 / S288c) (Baker's yeast).